Consider the following 410-residue polypeptide: Multifunctional CCA protein (410 aa).

The ATP site is built by G8 and R11. Residues G8 and R11 each contribute to the CTP site. Residues D21 and D23 each contribute to the Mg(2+) site. Residues R91, R137, and R140 each contribute to the ATP site. CTP is bound by residues R91, R137, and R140. An HD domain is found at 225 to 326 (SGIHTLMTLQ…LNVLKKTDAF (102 aa)).

This sequence belongs to the tRNA nucleotidyltransferase/poly(A) polymerase family. Bacterial CCA-adding enzyme type 1 subfamily. Monomer. Can also form homodimers and oligomers. Requires Mg(2+) as cofactor. Ni(2+) serves as cofactor.

It carries out the reaction a tRNA precursor + 2 CTP + ATP = a tRNA with a 3' CCA end + 3 diphosphate. It catalyses the reaction a tRNA with a 3' CCA end + 2 CTP + ATP = a tRNA with a 3' CCACCA end + 3 diphosphate. Catalyzes the addition and repair of the essential 3'-terminal CCA sequence in tRNAs without using a nucleic acid template. Adds these three nucleotides in the order of C, C, and A to the tRNA nucleotide-73, using CTP and ATP as substrates and producing inorganic pyrophosphate. tRNA 3'-terminal CCA addition is required both for tRNA processing and repair. Also involved in tRNA surveillance by mediating tandem CCA addition to generate a CCACCA at the 3' terminus of unstable tRNAs. While stable tRNAs receive only 3'-terminal CCA, unstable tRNAs are marked with CCACCA and rapidly degraded. This is Multifunctional CCA protein from Neisseria gonorrhoeae (strain NCCP11945).